Consider the following 468-residue polypeptide: UDP-N-acetylmuramate--L-alanine ligase (468 aa).

Residue 114–120 participates in ATP binding; sequence GTHGKTT.

The protein belongs to the MurCDEF family.

The protein localises to the cytoplasm. It carries out the reaction UDP-N-acetyl-alpha-D-muramate + L-alanine + ATP = UDP-N-acetyl-alpha-D-muramoyl-L-alanine + ADP + phosphate + H(+). Its pathway is cell wall biogenesis; peptidoglycan biosynthesis. In terms of biological role, cell wall formation. The protein is UDP-N-acetylmuramate--L-alanine ligase of Brucella anthropi (strain ATCC 49188 / DSM 6882 / CCUG 24695 / JCM 21032 / LMG 3331 / NBRC 15819 / NCTC 12168 / Alc 37) (Ochrobactrum anthropi).